Here is a 93-residue protein sequence, read N- to C-terminus: UPF0175 protein AF_0100 (93 aa).

This sequence belongs to the UPF0175 family.

The sequence is that of UPF0175 protein AF_0100 from Archaeoglobus fulgidus (strain ATCC 49558 / DSM 4304 / JCM 9628 / NBRC 100126 / VC-16).